Consider the following 79-residue polypeptide: D-alanyl carrier protein (79 aa).

The region spanning 1–77 is the Carrier domain; sequence MDIKSEVIEI…KIIAGIVELQ (77 aa). At Ser-35 the chain carries O-(pantetheine 4'-phosphoryl)serine.

This sequence belongs to the DltC family. In terms of processing, 4'-phosphopantetheine is transferred from CoA to a specific serine of apo-DCP.

It localises to the cytoplasm. It functions in the pathway cell wall biogenesis; lipoteichoic acid biosynthesis. Carrier protein involved in the D-alanylation of lipoteichoic acid (LTA). The loading of thioester-linked D-alanine onto DltC is catalyzed by D-alanine--D-alanyl carrier protein ligase DltA. The DltC-carried D-alanyl group is further transferred to cell membrane phosphatidylglycerol (PG) by forming an ester bond, probably catalyzed by DltD. D-alanylation of LTA plays an important role in modulating the properties of the cell wall in Gram-positive bacteria, influencing the net charge of the cell wall. In Streptococcus pneumoniae serotype 2 (strain D39 / NCTC 7466), this protein is D-alanyl carrier protein.